We begin with the raw amino-acid sequence, 114 residues long: rRNA-processing protein cgrA (114 aa).

Positions 1–13 (MSSAAPAPSTHAA) are enriched in low complexity. Disordered regions lie at residues 1–47 (MSSA…AARK) and 77–114 (RRAA…LLNS). Positions 40-101 (TKRAAARKEQ…EKMHRKRVER (62 aa)) form a coiled coil. Basic and acidic residues predominate over residues 77–93 (RRAAKEEKERYEKMAEK). Over residues 94 to 114 (MHRKRVERLKKREKRNKLLNS) the composition is skewed to basic residues.

The protein belongs to the CGR1 family.

It is found in the nucleus. The protein resides in the nucleolus. In terms of biological role, involved in nucleolar integrity and required for processing of the pre-rRNA for the 60S ribosome subunit. This Emericella nidulans (strain FGSC A4 / ATCC 38163 / CBS 112.46 / NRRL 194 / M139) (Aspergillus nidulans) protein is rRNA-processing protein cgrA (cgrA).